The sequence spans 197 residues: Glycerol-3-phosphate acyltransferase (197 aa).

Transmembrane regions (helical) follow at residues 1-21 (MNILIIFASYLLGSLPTGFLI), 50-70 (WPALFVFIIDLGKGLIAVKIA), 77-97 (GLIEVIAGISAISGHIWPIWL), 111-131 (MFLALSWKVGLASLGFFLIVL), 137-157 (VSLSSISAAILLPIFMFFYLG), and 158-178 (KFMHSYFFISLIVALLVIWKH).

It belongs to the PlsY family. Probably interacts with PlsX.

Its subcellular location is the cell inner membrane. It carries out the reaction an acyl phosphate + sn-glycerol 3-phosphate = a 1-acyl-sn-glycero-3-phosphate + phosphate. It functions in the pathway lipid metabolism; phospholipid metabolism. Functionally, catalyzes the transfer of an acyl group from acyl-phosphate (acyl-PO(4)) to glycerol-3-phosphate (G3P) to form lysophosphatidic acid (LPA). This enzyme utilizes acyl-phosphate as fatty acyl donor, but not acyl-CoA or acyl-ACP. In Prochlorococcus marinus (strain MIT 9301), this protein is Glycerol-3-phosphate acyltransferase.